We begin with the raw amino-acid sequence, 279 residues long: High choriolytic enzyme 2 (279 aa).

A signal peptide spans 1–20; that stretch reads MNLASSACLLLLFLLGIAQA. The propeptide at 21 to 79 is activation peptide; sequence LPVQNEEGHEEGNKEGHGEEGVEEGDEDDFVDFTTRILTSNNNTDQLLLEGDLVAPTNR. Residues 26–40 are compositionally biased toward basic and acidic residues; the sequence is EEGHEEGNKEGHGEE. The tract at residues 26–46 is disordered; it reads EEGHEEGNKEGHGEEGVEEGD. N-linked (GlcNAc...) asparagine glycosylation occurs at Asn62. The Peptidase M12A domain occupies 80–279; sequence NAMKCWYNSC…TRSNVLYNCR (200 aa). 3 disulfides stabilise this stretch: Cys84/Cys89, Cys129/Cys278, and Cys150/Cys170. Zn(2+) is bound at residue His178. Glu179 is a catalytic residue. Zn(2+) is bound by residues His182 and His188.

It depends on Zn(2+) as a cofactor.

The protein localises to the zymogen granule. It catalyses the reaction Hydrolysis of the inner layer of fish egg envelope. Also hydrolysis of casein and small molecule substrates such as succinyl-Leu-Leu-Val-Tyr-|-7-(4-methyl)coumarylamide.. Its function is as follows. Participates in the breakdown of the egg envelope, which is derived from the egg extracellular matrix, at the time of hatching. Thus allowing the newly hatched fish to swim free. HCE binds tightly to the egg envelope while it exerts the choriolytic swelling action. This is High choriolytic enzyme 2 (hceb) from Oryzias latipes (Japanese rice fish).